We begin with the raw amino-acid sequence, 105 residues long: MLYAIVETAGRQYRVEEGKILYTEKQKDYSPGDEIVFDRVVFVRKDGEVLVGKPYVEGAKVVGKVLEHAKARKVKTVKYRPRKNSKVEKGHRQWYTAIKIEKIEL.

The protein belongs to the bacterial ribosomal protein bL21 family. In terms of assembly, part of the 50S ribosomal subunit. Contacts protein L20.

Its function is as follows. This protein binds to 23S rRNA in the presence of protein L20. This chain is Large ribosomal subunit protein bL21, found in Thermotoga maritima (strain ATCC 43589 / DSM 3109 / JCM 10099 / NBRC 100826 / MSB8).